A 515-amino-acid polypeptide reads, in one-letter code: Calcium-dependent protein kinase 2 (515 aa).

The tract at residues 1–51 (MGNCCPGSGDAEPASSDASTGNGSSSFKAGASPSSAPAQNKPPAPIGPVLG) is disordered. The N-myristoyl glycine moiety is linked to residue Gly-2. The segment covering 14-38 (ASSDASTGNGSSSFKAGASPSSAPA) has biased composition (low complexity). One can recognise a Protein kinase domain in the interval 61–319 (YTIGKELGRG…AYEVLNHPWI (259 aa)). ATP is bound by residues 67–75 (LGRGQFGVT) and Lys-90. The active-site Proton acceptor is the Asp-185. The segment at 325 to 355 (APDTPLDNAVMNRLKQFRAMNQFKKAALRVI) is autoinhibitory domain. 4 EF-hand domains span residues 362–397 (EEIRGLKEMFKSMDSDNSGTITVDELRKGLSKQGTK), 398–433 (LTEAEVQQLMEAADADGNGTIDYDEFITATMHMNRM), 434–469 (DREEHLYTAFQYFDKDNSGCISKEELEQALREKGLL), and 473–504 (DIKDIISEVDADNDGRIDYSEFAAMMRKGNPE). The Ca(2+) site is built by Asp-375, Asp-377, Ser-379, Thr-381, Glu-386, Asp-411, Asp-413, Asn-415, Thr-417, Glu-422, Asp-447, Asp-449, Ser-451, Cys-453, Glu-458, Asp-482, Asp-484, Asp-486, Arg-488, and Glu-493.

The protein belongs to the protein kinase superfamily. Ser/Thr protein kinase family. CDPK subfamily. Expressed in heading panicles, spikelets and mature pollen grains.

It localises to the membrane. It catalyses the reaction L-seryl-[protein] + ATP = O-phospho-L-seryl-[protein] + ADP + H(+). It carries out the reaction L-threonyl-[protein] + ATP = O-phospho-L-threonyl-[protein] + ADP + H(+). Its activity is regulated as follows. Activated by calcium. Autophosphorylation may play an important role in the regulation of the kinase activity. Its function is as follows. May play a role in signal transduction pathways that involve calcium as a second messenger. In Oryza sativa subsp. japonica (Rice), this protein is Calcium-dependent protein kinase 2.